We begin with the raw amino-acid sequence, 271 residues long: Putative phosphoenolpyruvate synthase regulatory protein (271 aa).

An ADP-binding site is contributed by 151 to 158; sequence GVSRSGKT.

Belongs to the pyruvate, phosphate/water dikinase regulatory protein family. PSRP subfamily.

It catalyses the reaction [pyruvate, water dikinase] + ADP = [pyruvate, water dikinase]-phosphate + AMP + H(+). It carries out the reaction [pyruvate, water dikinase]-phosphate + phosphate + H(+) = [pyruvate, water dikinase] + diphosphate. Its function is as follows. Bifunctional serine/threonine kinase and phosphorylase involved in the regulation of the phosphoenolpyruvate synthase (PEPS) by catalyzing its phosphorylation/dephosphorylation. The sequence is that of Putative phosphoenolpyruvate synthase regulatory protein from Burkholderia lata (strain ATCC 17760 / DSM 23089 / LMG 22485 / NCIMB 9086 / R18194 / 383).